The chain runs to 305 residues: MEVAAATATSFTTLRARTSAIIPSSTRNLRSKPRFSSSSSLRASLSNGFLSPYTGGSISSDLCGAKLRAESLNPLNFSSSKPKRGVVTMVIPFSKGSAHEQPPPDLASYLFKNRIVYLGMSLVPSVTELILAEFLYLQYEDEEKPIYLYINSTGTTKNGEKLGYDTEAFAIYDVMGYVKPPIFTLCVGNAWGEAALLLTAGAKGNRSALPSSTIMIKQPIARFQGQATDVEIARKEIKHIKTEMVKLYSKHIGKSPEQIEADMKRPKYFSPTEAVEYGIIDKVVYNERGSQDRGVVSDLKKAQLI.

Residues 1 to 68 (MEVAAATATS…SSDLCGAKLR (68 aa)) constitute a chloroplast transit peptide.

Belongs to the peptidase S14 family. In terms of assembly, component of the chloroplastic Clp protease core complex which consist of at least 16 proteins: CLPP4 (3 copies), CLPP5 (3 copies), CLPR4 (2 copies), ClpP1 (1 copy), CLPP6 (1 copy), CLPR2 (1 copy), CLPT1 (1 copy), CLPT2 (1 copy) and 3 copies of CLPP3 and/or CLPR1 and/or CLPR3. The core complex is organized in two heptameric rings, one containing CLPP3,4,5,6 in a 1:2:3:1 ratio and the other CLPP1 and CLPR1,2,3,4 in a 3:1:1:1:1 ratio.

It is found in the plastid. Its subcellular location is the chloroplast. In terms of biological role, involved in plastid protein homeostasis. The polypeptide is ATP-dependent Clp protease proteolytic subunit-related protein 4, chloroplastic (Arabidopsis thaliana (Mouse-ear cress)).